Consider the following 337-residue polypeptide: MDWLGNRVSVGNIALLAIGASMGFIAKTSTLSKPEAPNTVQQYGYCKKLSSEKRNQAAGCPYEYLVSIYGRHHFESLVKEFNPLLKQEDPVKYDLVLEIMDAVHFALILVDDISDDSYQRKNQPTAHLIYGASETANRAYLVLTGVINRALRERPVLGAELLKALEDILQGQDLSLVWRRDGLKSFQYQGDESIAAYKNMASLKTGTLFVLLGRLLNDGGNELDDLLSRFGWFAQLQNDCKNIYSAEYATNKGAVAEDLRNGELSYPIVIALNDNSTSRVMERALASHAEADVEEALQALQSKPVRDACMRALQQASVGLEKLVLLWGRREKMQAGS.

2 residues coordinate Mg(2+): Asp111 and Asp115.

It belongs to the FPP/GGPP synthase family. Mg(2+) serves as cofactor.

It participates in secondary metabolite biosynthesis. In terms of biological role, prenyltransferase; part of the gene cluster that mediates the biosynthesis of terpendoles, indole-diterpene (IDT) mycotoxins including terpendole I, terpendole K, terpendole C, as well as the kinesin Eg5 inhibitor terpendole E. Terpendoles biosynthesis begins with the synthesis of geranylgeranyl diphosphate (GGPP) by a yet unidentified GGPP synthase. Condensation of indole-3-glycerol phosphate with GGPP by the prenyltransferase terC then forms 3-geranylgeranylindole (3-GGI), followed by epoxidation and cyclization of this intermediate (by the FAD-dependent monooxygeanse terM and the terpene cyclase terB) to form paspaline. The cytochrome monooxygenase terQ then hydroxylates paspalline at C-11 to yield terpendole E. The cytochrome monooxygenase terP converts terpendole E to 13-desoxyterpendole I, and terQ converts 13-desoxyterpendole I into terpendole I. TerF and terK are required for conversion of terpendole I to terpendole C which is further converted to terpendole K. This is Prenyltransferase terC from Tolypocladium album (Soil fungus).